We begin with the raw amino-acid sequence, 346 residues long: Phosphate acyltransferase (346 aa).

The protein belongs to the PlsX family. As to quaternary structure, homodimer. Probably interacts with PlsY.

The protein localises to the cytoplasm. It carries out the reaction a fatty acyl-[ACP] + phosphate = an acyl phosphate + holo-[ACP]. Its pathway is lipid metabolism; phospholipid metabolism. Catalyzes the reversible formation of acyl-phosphate (acyl-PO(4)) from acyl-[acyl-carrier-protein] (acyl-ACP). This enzyme utilizes acyl-ACP as fatty acyl donor, but not acyl-CoA. The chain is Phosphate acyltransferase from Brucella melitensis biotype 2 (strain ATCC 23457).